The following is a 494-amino-acid chain: GPI alpha-1,6-mannosyltransferase 2 (494 aa).

Residues 1 to 13 (MWSLDPSQKEVLR) are Cytoplasmic-facing. Residues 14-34 (FAVSCRILTLMLQALFNIIIP) traverse the membrane as a helical segment. Topologically, residues 35 to 77 (DHHADAFSPPRLASSCSVDQLVEGLLGGLSRWDAEHFLFIAEH) are lumenal. A helical transmembrane segment spans residues 78–98 (GYLYEHNFAFFPGFPLALLMG). Topologically, residues 99–113 (TELLRPLQGLLSQRS) are cytoplasmic. Residues 114–134 (CLLVSVALLNFLFSVLAAVTL) form a helical membrane-spanning segment. Topologically, residues 135–136 (HD) are lumenal. Residues 137–157 (LGCLVLGCPRQAFYAAMLFCL) form a helical membrane-spanning segment. Topologically, residues 158-161 (SPAN) are cytoplasmic. The chain crosses the membrane as a helical span at residues 162 to 182 (VFLAAGYSEALFAFLTFSAMG). The Lumenal segment spans residues 183-192 (QLERGRSWAS). A helical transmembrane segment spans residues 193–213 (GLLFALATGVRSNGLVSVGFL). The Cytoplasmic portion of the chain corresponds to 214 to 234 (LHAQCRGFFSSLVVLNPLKPL). The chain crosses the membrane as a helical span at residues 235–255 (FKLMASLCLSVLTVSLPFALF). The Lumenal segment spans residues 256–327 (QYYAYTQFCL…RYYELRQVPN (72 aa)). A helical transmembrane segment spans residues 328–348 (FLLATPVAVLVVWAAWTYVTT). Residues 349-379 (HPWLCLTLGLRRSKDSKKTLEKPHPGFLSPK) are Cytoplasmic-facing. A helical transmembrane segment spans residues 380–400 (VFVYLVHAAGLLLFGSLCMHV). Residues 401-470 (QVLTRLLCSS…NWRACSPVTR (70 aa)) are Lumenal-facing. Residues 471-491 (CILGYFLTYWLLGLLLHCNFL) form a helical membrane-spanning segment. At 492-494 (PWT) the chain is on the cytoplasmic side.

This sequence belongs to the PIGV family. Not N-glycosylated.

Its subcellular location is the endoplasmic reticulum membrane. Its pathway is glycolipid biosynthesis; glycosylphosphatidylinositol-anchor biosynthesis. In terms of biological role, alpha-1,6-mannosyltransferase that catalyzes the transfer of the second mannose, via an alpha-1,6 bond, from a dolichol-phosphate-mannose (Dol-P-Man) to the alpha-D-Man-(1-&gt;4)-alpha-D-GlcN-(1-&gt;6)-(1-radyl,2-acyl-sn-glycero-3-phospho)-2-acyl-inositol intermediate to generate an alpha-D-Man-(1-&gt;6)-alpha-D-Man-(1-&gt;4)-alpha-D-GlcN-(1-&gt;6)-(1-radyl,2-acyl-sn-glycero-3-phospho)-2-acyl-inositol and participates in the seventh step of the glycosylphosphatidylinositol-anchor biosynthesis. Also transfers the second mannose on a 2-PEtn-alpha-D-Man-(1-&gt;4)-alpha-D-GlcN-(1-&gt;6)-(1-radyl,2-acyl-sn-glycero-3-phospho)-2-acyl-inositol. This chain is GPI alpha-1,6-mannosyltransferase 2, found in Cricetulus griseus (Chinese hamster).